A 569-amino-acid chain; its full sequence is MKKISRKEYASMYGPTTGDKVRLGDTDLIAEVEHDYTIYGEELKFGGGKTLREGMSQSNNPSKEELDLIITNALIVDYTGIYKADIGIKDGKIAGIGKGGNKDMQDGVKNNLSVGPATEALAGEGLIVTAGGIDTHIHFISPQQIPTAFASGVTTMIGGGTGPADGTNATTITPGRRNLKFMLRAAEEYSMNFGFLAKGNVSNDASLADQIEAGAIGFKIHEDWGTTPSAINHALDVADKYDVQVAIHTDTLNEAGCVEDTMAAIAGRTMHTFHTEGAGGGHAPDIIKVAGEHNILPASTNPTIPFTVNTEAEHMDMLMVCHHLDKSIKEDVQFADSRIRPQTIAAEDTLHDMGIFSITSSDSQAMGRVGEVITRTWQTADKNKKEFGRLKEEKGDNDNFRIKRYLSKYTINPAIAHGISEYVGSVEVGKVADLVLWSPAFFGVKPNMIIKGGFIALSQMGDANASIPTPQPVYYREMFAHHGKAKYDANITFVSQAAYDKGIKEELGLERQVLPVKNCRNITKKDMQFNDTTAHIEVNSETYHVFVDGKEVTSKPANKVSLAQLFSIF.

Positions 131–569 constitute a Urease domain; it reads GGIDTHIHFI…VSLAQLFSIF (439 aa). The Ni(2+) site is built by H136, H138, and K219. The residue at position 219 (K219) is an N6-carboxylysine. H221 provides a ligand contact to substrate. The Ni(2+) site is built by H248 and H274. H322 (proton donor) is an active-site residue. Residue D362 coordinates Ni(2+).

This sequence belongs to the metallo-dependent hydrolases superfamily. Urease alpha subunit family. In terms of assembly, heterohexamer of 3 UreA (alpha) and 3 UreB (beta) subunits. The cofactor is Ni cation. Carboxylation allows a single lysine to coordinate two nickel ions.

It is found in the cytoplasm. The enzyme catalyses urea + 2 H2O + H(+) = hydrogencarbonate + 2 NH4(+). Its pathway is nitrogen metabolism; urea degradation; CO(2) and NH(3) from urea (urease route): step 1/1. In Helicobacter pylori (strain HPAG1), this protein is Urease subunit beta.